We begin with the raw amino-acid sequence, 377 residues long: Anhydro-N-acetylmuramic acid kinase (377 aa).

G18–D25 contributes to the ATP binding site.

This sequence belongs to the anhydro-N-acetylmuramic acid kinase family.

It carries out the reaction 1,6-anhydro-N-acetyl-beta-muramate + ATP + H2O = N-acetyl-D-muramate 6-phosphate + ADP + H(+). It participates in amino-sugar metabolism; 1,6-anhydro-N-acetylmuramate degradation. Its pathway is cell wall biogenesis; peptidoglycan recycling. In terms of biological role, catalyzes the specific phosphorylation of 1,6-anhydro-N-acetylmuramic acid (anhMurNAc) with the simultaneous cleavage of the 1,6-anhydro ring, generating MurNAc-6-P. Is required for the utilization of anhMurNAc either imported from the medium or derived from its own cell wall murein, and thus plays a role in cell wall recycling. This is Anhydro-N-acetylmuramic acid kinase from Xanthomonas oryzae pv. oryzae (strain MAFF 311018).